Here is a 1073-residue protein sequence, read N- to C-terminus: Ubiquitin carboxyl-terminal hydrolase 53 (1073 aa).

A USP domain is found at 30–351 (KGLLNEPGQN…QPLLLFYANP (322 aa)). Cys-41 serves as the catalytic Nucleophile. 12 residues coordinate Zn(2+): His-66, Cys-68, Cys-73, Cys-76, His-132, Cys-144, Cys-149, His-152, Cys-165, Cys-168, Cys-224, and Cys-228. The active-site Proton acceptor is the His-301. Disordered stretches follow at residues 391–437 (LKEN…HIDQ) and 485–636 (LSHF…PKQK). Positions 407-418 (KFPTDNISSSNR) are enriched in polar residues. Positions 524-541 (QSRASAQIISSSKSQILA) are enriched in low complexity. Over residues 553–563 (DNGTGYDTDSS) the composition is skewed to polar residues. Low complexity predominate over residues 612 to 627 (NISNKPKSSKDPSFSN).

The protein belongs to the peptidase C19 family. In terms of assembly, interacts (via the C-terminal region) with the heterodimer TJP1:TJP2. In terms of tissue distribution, expressed predominantly in skeletal muscle and heart.

It is found in the cell junction. Its subcellular location is the tight junction. The catalysed reaction is Thiol-dependent hydrolysis of ester, thioester, amide, peptide and isopeptide bonds formed by the C-terminal Gly of ubiquitin (a 76-residue protein attached to proteins as an intracellular targeting signal).. Functionally, deubiquitinase that mediates 'Lys-63'-linked deubiquitination of tight junction proteins, such as MARVELD2 and LSR, and which is involved in the survival of auditory hair cells and hearing. Specifically cleaves 'Lys-63'-linked polyubiquitin chains composed of at least 3 ubiquitin molecules, while it is not able to deubiquitinate substrates with shorter ubiquitin chains: recognizes ubiquitin chain in position S2 and catalyzes en bloc cleavage of polyubiquitin chains from substrate proteins. Probably acts by modulating the barrier properties and mechanical stability of tight junctions via deubiquitination of MARVELD2 and LSR. The sequence is that of Ubiquitin carboxyl-terminal hydrolase 53 from Homo sapiens (Human).